The primary structure comprises 61 residues: Small ribosomal subunit protein uS14 (61 aa).

Residues Cys24, Cys27, Cys40, and Cys43 each contribute to the Zn(2+) site.

The protein belongs to the universal ribosomal protein uS14 family. Zinc-binding uS14 subfamily. Part of the 30S ribosomal subunit. Contacts proteins S3 and S10. It depends on Zn(2+) as a cofactor.

Its function is as follows. Binds 16S rRNA, required for the assembly of 30S particles and may also be responsible for determining the conformation of the 16S rRNA at the A site. The chain is Small ribosomal subunit protein uS14 from Staphylococcus carnosus (strain TM300).